A 512-amino-acid chain; its full sequence is Centrosomal protein CCDC61 (512 aa).

Residue Met-1 is modified to N-acetylmethionine. Residues 1–143 are head domain; sequence MDQPAGLQVD…PLPLPYQGKP (143 aa). Coiled coils occupy residues 178 to 205 and 248 to 275; these read IWHL…SREE and CRRL…LTSE. A disordered region spans residues 276 to 477; sequence LALYKRGRRT…KSLANSGGWV (202 aa). Thr-285 is modified (phosphothreonine). Residues 293-306 are compositionally biased toward basic and acidic residues; the sequence is TREDRASSSRERSA. Phosphoserine is present on residues Ser-334, Ser-336, Ser-373, and Ser-376. Positions 407 to 425 are enriched in low complexity; sequence RSSSVDSFRSRCSSASSCS. Residues Ser-447 and Ser-473 each carry the phosphoserine modification.

The protein belongs to the CCDC61 family. As to quaternary structure, forms homodimers (via head domain). Interacts with CEP170. Interacts with PCM1 and CEP131. Binds tubulin.

The protein localises to the cytoplasm. It localises to the cytoskeleton. The protein resides in the microtubule organizing center. It is found in the centrosome. Its subcellular location is the centriolar satellite. The protein localises to the cilium basal body. In terms of biological role, microtubule-binding centrosomal protein required for centriole cohesion, independently of the centrosome-associated protein/CEP250 and rootletin/CROCC linker. In interphase, required for anchoring microtubule at the mother centriole subdistal appendages and for centrosome positioning. During mitosis, may be involved in spindle assembly and chromatin alignment by regulating the organization of spindle microtubules into a symmetrical structure. Has been proposed to play a role in CEP170 recruitment to centrosomes. However, this function could not be confirmed. Plays a non-essential role in ciliogenesis. The protein is Centrosomal protein CCDC61 of Homo sapiens (Human).